We begin with the raw amino-acid sequence, 361 residues long: Chorismate synthase (361 aa).

Arg48 and Arg54 together coordinate NADP(+). FMN contacts are provided by residues 125–127 (RSS), 238–239 (NA), Gly278, 293–297 (KPTSS), and Arg319.

It belongs to the chorismate synthase family. In terms of assembly, homotetramer. The cofactor is FMNH2.

The enzyme catalyses 5-O-(1-carboxyvinyl)-3-phosphoshikimate = chorismate + phosphate. Its pathway is metabolic intermediate biosynthesis; chorismate biosynthesis; chorismate from D-erythrose 4-phosphate and phosphoenolpyruvate: step 7/7. Catalyzes the anti-1,4-elimination of the C-3 phosphate and the C-6 proR hydrogen from 5-enolpyruvylshikimate-3-phosphate (EPSP) to yield chorismate, which is the branch point compound that serves as the starting substrate for the three terminal pathways of aromatic amino acid biosynthesis. This reaction introduces a second double bond into the aromatic ring system. The protein is Chorismate synthase of Escherichia coli (strain K12 / MC4100 / BW2952).